A 662-amino-acid polypeptide reads, in one-letter code: Pollen receptor-like kinase 1 (662 aa).

The signal sequence occupies residues 1–31; it reads MPPMQARTLSVYNVMVPLVCLLLFFSTPTHG. Residues 32–256 lie on the Extracellular side of the membrane; that stretch reads LSDSEAILKF…ARPKSSSRGP (225 aa). 6 LRR repeats span residues 79–98, 99–121, 122–144, 147–169, 171–191, and 192–214; these read QMEN…SGLT, SLRT…KKLA, ALKS…AFEG, WLKK…VAKL, KLLE…EFEH, and QLHL…LSMT. N197 carries N-linked (GlcNAc...) asparagine glycosylation. The disordered stretch occupies residues 233-253; it reads ECDSPYIEHPPQSEARPKSSS. A helical membrane pass occupies residues 257-277; that stretch reads LVITAIVAALTILIILGVIFL. Residues 278 to 662 are Cytoplasmic-facing; it reads LNRSYKNKKP…GESCESISFA (385 aa). Residues 288-330 are disordered; the sequence is RLAVETGPSSLQKKTGIREADQSRRDRKKADHRKGSGTTKRMG. Positions 357–639 constitute a Protein kinase domain; that stretch reads KASAEILGSG…EREGDDDDFY (283 aa). Phosphoserine is present on S359. ATP-binding positions include 363–371 and K385; that span reads LGSGCFGAS. A Phosphoserine modification is found at S437. T457 is modified (phosphothreonine). Residue Y527 is modified to Phosphotyrosine. Residues 636–662 form a disordered region; it reads DDFYSTYVSETDGRSSKGESCESISFA. The span at 646–655 shows a compositional bias: basic and acidic residues; it reads TDGRSSKGES.

Belongs to the protein kinase superfamily. Ser/Thr protein kinase family. Interacts in vitro with ROPGEF1 (via PRONE domain). As to expression, expressed in pollen and/or in flowers, but not in leaves.

The protein localises to the cell membrane. The catalysed reaction is L-seryl-[protein] + ATP = O-phospho-L-seryl-[protein] + ADP + H(+). It catalyses the reaction L-threonyl-[protein] + ATP = O-phospho-L-threonyl-[protein] + ADP + H(+). Functionally, receptor-like kinase involved in the control of pollen germination and pollen tube polar growth. The sequence is that of Pollen receptor-like kinase 1 from Arabidopsis thaliana (Mouse-ear cress).